The sequence spans 352 residues: MGKTKAFNDTFLKACKGEKTDHVPAWYMRQAGRSQPEYRALKEKYGLFEITHQPELCAYVTRLPVEQYGVDAAILYKDIMTPLPAIGVDVEIKNGIGPVIDSPIRTKADIERLGELHPEEDLPYVLDTIQLLTKEQLNVPLIGFAGAPFTMASYMIEGGPSKNYHKTKALMYSEPETWMLLMNKLADMTITYIRAQVKAGVSAFQIFDSWVGALNAADYRTFIKPVMQRIFTELKSENVPMIMYGVGASHLVKDWHDLPLDVVGLDWRMSVDEARKEGLTKTLQGNLDPTILLSPWEVIEERAKDILDQGMKSDHFIFNLGHGVFPDVSPDTLKKLTDFIHDYSAKHKKSSI.

Residues 29–33, phenylalanine 48, aspartate 78, tyrosine 154, serine 209, and histidine 322 contribute to the substrate site; that span reads RQAGR.

This sequence belongs to the uroporphyrinogen decarboxylase family. In terms of assembly, homodimer.

Its subcellular location is the cytoplasm. The catalysed reaction is uroporphyrinogen III + 4 H(+) = coproporphyrinogen III + 4 CO2. Its pathway is porphyrin-containing compound metabolism; protoporphyrin-IX biosynthesis; coproporphyrinogen-III from 5-aminolevulinate: step 4/4. Functionally, catalyzes the decarboxylation of four acetate groups of uroporphyrinogen-III to yield coproporphyrinogen-III. The chain is Uroporphyrinogen decarboxylase from Bacillus pumilus (strain SAFR-032).